A 489-amino-acid chain; its full sequence is Rhamnulokinase (489 aa).

An ATP-binding site is contributed by 13–17 (ASSGR). Cysteine 68 and cysteine 222 form a disulfide bridge. Substrate contacts are provided by residues glycine 83 and 236–238 (HDT). The Proton acceptor role is filled by aspartate 237. Threonine 259 contacts ATP. Asparagine 296 contributes to the substrate binding site. Glutamine 304 contributes to the ATP binding site. A disulfide bridge connects residues cysteine 353 and cysteine 370. Glycine 402 is an ATP binding site. A disulfide bridge links cysteine 413 with cysteine 417.

It belongs to the rhamnulokinase family. It depends on Mg(2+) as a cofactor.

The catalysed reaction is L-rhamnulose + ATP = L-rhamnulose 1-phosphate + ADP + H(+). It functions in the pathway carbohydrate degradation; L-rhamnose degradation; glycerone phosphate from L-rhamnose: step 2/3. Involved in the catabolism of L-rhamnose (6-deoxy-L-mannose). Catalyzes the transfer of the gamma-phosphate group from ATP to the 1-hydroxyl group of L-rhamnulose to yield L-rhamnulose 1-phosphate. In Salmonella choleraesuis (strain SC-B67), this protein is Rhamnulokinase.